The chain runs to 636 residues: Golgin subfamily A member 8F (636 aa).

Disordered regions lie at residues 1-72 (MAEE…SATL) and 107-127 (NKQV…KQKA). A compositionally biased stretch (polar residues) spans 38-50 (TNGSIHETATSGG). 3 coiled-coil regions span residues 93-148 (VSQL…LNTD), 211-263 (LEQS…MSQE), and 306-412 (EVEL…QQKQ). Over residues 109-127 (QVEHQLEEEKKANNEKQKA) the composition is skewed to basic and acidic residues. Disordered stretches follow at residues 344–364 (LREQ…QEER), 422–449 (ALPG…SIPQ), 496–537 (PITK…GVAA), and 588–612 (PVQG…QDHQ). The segment covering 429–441 (GGGHLDSEGEEAP) has biased composition (basic and acidic residues). Residues 509 to 522 (PGGGHHQAGPGQGG) are compositionally biased toward gly residues.

Belongs to the GOLGA8 family.

The protein is Golgin subfamily A member 8F of Homo sapiens (Human).